The chain runs to 456 residues: Phosphomethylpyrimidine synthase (456 aa).

Substrate-binding positions include Asn80, Met109, Tyr139, His175, 195-197 (SRG), 236-239 (DSLR), and Glu275. His279 is a binding site for Zn(2+). Tyr302 provides a ligand contact to substrate. His343 contacts Zn(2+). [4Fe-4S] cluster is bound by residues Cys423, Cys426, and Cys431.

It belongs to the ThiC family. [4Fe-4S] cluster is required as a cofactor.

The enzyme catalyses 5-amino-1-(5-phospho-beta-D-ribosyl)imidazole + S-adenosyl-L-methionine = 4-amino-2-methyl-5-(phosphooxymethyl)pyrimidine + CO + 5'-deoxyadenosine + formate + L-methionine + 3 H(+). It participates in cofactor biosynthesis; thiamine diphosphate biosynthesis. Its function is as follows. Catalyzes the synthesis of the hydroxymethylpyrimidine phosphate (HMP-P) moiety of thiamine from aminoimidazole ribotide (AIR) in a radical S-adenosyl-L-methionine (SAM)-dependent reaction. This chain is Phosphomethylpyrimidine synthase, found in Prochlorococcus marinus (strain MIT 9215).